The sequence spans 209 residues: Protease (209 aa).

Residues histidine 55, aspartate 72, and cysteine 123 contribute to the active site.

Belongs to the peptidase C5 family. In terms of assembly, interacts with protease cofactor pVI-C; this interaction is necessary for protease activation.

Its subcellular location is the virion. The protein localises to the host nucleus. The enzyme catalyses Cleaves proteins of the adenovirus and its host cell at two consensus sites: -Yaa-Xaa-Gly-Gly-|-Xaa- and -Yaa-Xaa-Gly-Xaa-|-Gly- (in which Yaa is Met, Ile or Leu, and Xaa is any amino acid).. With respect to regulation, requires DNA and protease cofactor for maximal activation. Inside nascent virions, becomes partially activated by binding to the viral DNA, allowing it to cleave the cofactor that binds to the protease and fully activates it. Actin, like the viral protease cofactor, seems to act as a cofactor in the cleavage of cytokeratin 18 and of actin itself. Its function is as follows. Cleaves viral precursor proteins (pTP, pIIIa, pVI, pVII, pVIII, and pX) inside newly assembled particles giving rise to mature virions. Protease complexed to its cofactor slides along the viral DNA to specifically locate and cleave the viral precursors. Mature virions have a weakened organization compared to the unmature virions, thereby facilitating subsequent uncoating. Without maturation, the particle lacks infectivity and is unable to uncoat. Late in adenovirus infection, in the cytoplasm, may participate in the cytoskeleton destruction. Cleaves host cell cytoskeletal keratins K7 and K18. This Human adenovirus D serotype 9 (HAdV-9) protein is Protease.